The chain runs to 346 residues: Biotin synthase (346 aa).

The 219-residue stretch at 38–256 (RQVQVSTLLS…IAVARIMMPT (219 aa)) folds into the Radical SAM core domain. Residues Cys-53, Cys-57, and Cys-60 each coordinate [4Fe-4S] cluster. Positions 97, 128, 188, and 260 each coordinate [2Fe-2S] cluster.

This sequence belongs to the radical SAM superfamily. Biotin synthase family. As to quaternary structure, homodimer. Requires [4Fe-4S] cluster as cofactor. [2Fe-2S] cluster serves as cofactor.

The enzyme catalyses (4R,5S)-dethiobiotin + (sulfur carrier)-SH + 2 reduced [2Fe-2S]-[ferredoxin] + 2 S-adenosyl-L-methionine = (sulfur carrier)-H + biotin + 2 5'-deoxyadenosine + 2 L-methionine + 2 oxidized [2Fe-2S]-[ferredoxin]. The protein operates within cofactor biosynthesis; biotin biosynthesis; biotin from 7,8-diaminononanoate: step 2/2. Its function is as follows. Catalyzes the conversion of dethiobiotin (DTB) to biotin by the insertion of a sulfur atom into dethiobiotin via a radical-based mechanism. This chain is Biotin synthase, found in Shigella dysenteriae serotype 1 (strain Sd197).